The primary structure comprises 351 residues: Auxin efflux carrier component 5 (351 aa).

10 helical membrane passes run 7–27, 39–59, 71–91, 100–120, 132–152, 210–230, 234–254, 271–291, 295–315, and 329–349; these read VYKV…GYGS, CDAI…IEFT, FIAA…LWAK, WSIT…GVPL, LVVQ…LFVL, ILGI…PGIL, ILIM…IFMA, MVLK…VLGL, VLRV…FIFA, and VIFG…ALEF.

The protein belongs to the auxin efflux carrier (TC 2.A.69.1) family. Expressed in elongating parts of hypocotyl, cotyledon vasculature and guard cells. Detected in root pericycle and root tip and at later developmental stages in leaves, stems and flowers. Expressed in veins of mature leaves.

It localises to the endoplasmic reticulum membrane. The protein localises to the cell membrane. Auxin transporter regulating intracellular auxin homeostasis and metabolism. Mediates the auxin transport from the cytosol into the lumen of the endoplasmic reticulum. May also act as an auxin efflux carrier when located to the cell membrane. PIN5 and PIN8 may have an antagonistic/compensatory activity. Involved in unfolded protein response (UPR) activation. Involved in the control of vein patterning. Promotes vein formation. PIN5, PIN6, and PIN8 control vein network geometry, but they are expressed in mutually exclusive domains of leaf vascular cells. The sequence is that of Auxin efflux carrier component 5 from Arabidopsis thaliana (Mouse-ear cress).